The sequence spans 237 residues: MPRIKICGIRTREEARWAAEAGADALGFIFAPHSKRYIQPETAREIILSLPPLISKVGVFAQASPEHVGRIVHECSLDTIQLHGNEDPRLYRHLSVTKIKAFSFPSAPAPGNSSAAAPDFSLVETSPSSSLPTSFRELPPASLHGILLDSSAGGRTGGTGIPLPWHTPEFQDFLHQVGDLGYPLILAGGLNPDNILEAIRLTRPYGVDVSSGVERNGRKDREKIQHFISQARKESPL.

The protein belongs to the TrpF family.

It catalyses the reaction N-(5-phospho-beta-D-ribosyl)anthranilate = 1-(2-carboxyphenylamino)-1-deoxy-D-ribulose 5-phosphate. The protein operates within amino-acid biosynthesis; L-tryptophan biosynthesis; L-tryptophan from chorismate: step 3/5. The sequence is that of N-(5'-phosphoribosyl)anthranilate isomerase from Desulfitobacterium hafniense (strain DSM 10664 / DCB-2).